A 730-amino-acid chain; its full sequence is Catalase-peroxidase (730 aa).

The interval 1–21 (MTENKCPVTGKMSKATAGSGT) is disordered. The segment at residues 95 to 218 (WHSAGTYRVG…LAAVQMGLIY (124 aa)) is a cross-link (tryptophyl-tyrosyl-methioninium (Trp-Tyr) (with M-244)). The active-site Proton acceptor is His96. Positions 218–244 (YVNPEGPNGNPDPLGSAHDVRETFARM) form a cross-link, tryptophyl-tyrosyl-methioninium (Tyr-Met) (with W-95). Position 259 (His259) interacts with heme b.

This sequence belongs to the peroxidase family. Peroxidase/catalase subfamily. Homodimer or homotetramer. Requires heme b as cofactor. In terms of processing, formation of the three residue Trp-Tyr-Met cross-link is important for the catalase, but not the peroxidase activity of the enzyme.

It catalyses the reaction H2O2 + AH2 = A + 2 H2O. It carries out the reaction 2 H2O2 = O2 + 2 H2O. Bifunctional enzyme with both catalase and broad-spectrum peroxidase activity. The sequence is that of Catalase-peroxidase from Clostridium botulinum (strain Alaska E43 / Type E3).